The sequence spans 896 residues: Putative mannosylglycerate hydrolase (896 aa).

Residues H12, D14, D125, and H348 each contribute to the a divalent metal cation site. D125 functions as the Nucleophile in the catalytic mechanism.

The protein belongs to the glycosyl hydrolase 38 family. Requires a divalent metal cation as cofactor.

It catalyses the reaction (2R)-2-O-(6-phospho-alpha-D-mannosyl)-glycerate + H2O = alpha-D-mannose 6-phosphate + (R)-glycerate. May hydrolyze 6-phospho-mannosyl-D-glycerate to mannose-6-phosphate and glycerate. This chain is Putative mannosylglycerate hydrolase (mngB), found in Halalkalibacterium halodurans (strain ATCC BAA-125 / DSM 18197 / FERM 7344 / JCM 9153 / C-125) (Bacillus halodurans).